A 1493-amino-acid chain; its full sequence is Inactive serine/threonine-protein kinase TEX14 (1493 aa).

3 ANK repeats span residues 27-54, 55-84, and 88-117; these read LHEY…AVNS, LGQT…DPNH, and DGST…DLRL. The 314-residue stretch at 198–511 folds into the Protein kinase domain; it reads VISAQNIYSF…IMKNDLKDFI (314 aa). ATP is bound by residues 204-212 and lysine 266; that span reads IYSFGFGKF. Serine 430 carries the post-translational modification Phosphoserine; by PLK1. Residues 559-573 are compositionally biased toward polar residues; sequence GSQFHSPRGHSSPTG. The tract at residues 559 to 615 is disordered; sequence GSQFHSPRGHSSPTGKATPEPPVPDVSPVAQQTHRQDAASPACSVAEEARNPSPDQT. Phosphoserine occurs at positions 560 and 660. Disordered stretches follow at residues 782–904 and 940–1081; these read HDSP…RISM and AATG…LTPD. The GPPX3Y motif lies at 789 to 795; it reads GPPASSY. The D-box motif lies at 846-854; that stretch reads KASLERDRN. Polar residues-rich tracts occupy residues 855–904 and 1001–1020; these read QNTS…RISM and CGQT…QRFT. Residues 1026 to 1037 are compositionally biased toward basic and acidic residues; sequence PPREDEQPEHSE. Residues 1053-1064 are compositionally biased toward polar residues; that stretch reads YSGQSAQSTCSP. Positions 1066–1075 are enriched in acidic residues; the sequence is SSEDTEDMTD. Serine 1100 is modified (phosphoserine). Positions 1115–1167 are disordered; the sequence is RPQASGEEKFQMRKNLGKNSEILTKSQFQPIRSPEGEQDETLKEPPKEVKEKD. Residues 1131-1144 show a composition bias toward polar residues; sequence GKNSEILTKSQFQP. Positions 1154-1167 are enriched in basic and acidic residues; it reads ETLKEPPKEVKEKD. Phosphoserine is present on serine 1262. Disordered stretches follow at residues 1288–1307 and 1341–1466; these read GAGS…ATQR and KGQQ…EEEE. The span at 1343-1362 shows a compositional bias: polar residues; that stretch reads QQVSSTALDENTASRPGSTE. The segment covering 1363–1380 has biased composition (basic and acidic residues); sequence NDQRHLEEQETHSNKEDS. Phosphoserine is present on serine 1400. Residues 1426–1456 are compositionally biased toward basic and acidic residues; the sequence is PAREASSKDQEVGEKKRKGEESTKPEKRKPE. Serine 1492 is modified (phosphoserine).

It belongs to the protein kinase superfamily. As to quaternary structure, interacts with KIF23 and RBM44. Interacts with CEP55; inhibiting interaction between CEP55 and PDCD6IP/ALIX and TSG101. Post-translationally, phosphorylated on Thr residues by CDK1 during early phases of mitosis, promoting the interaction with PLK1 and recruitment to kinetochores. Phosphorylated on Ser-430 by PLK1 during late prometaphase promotes the rapid depletion from kinetochores and its subsequent degradation by the APC/C complex.

The protein resides in the cytoplasm. Its subcellular location is the midbody. The protein localises to the chromosome. It is found in the centromere. It localises to the kinetochore. Its function is as follows. Required both for the formation of intercellular bridges during meiosis and for kinetochore-microtubule attachment during mitosis. Intercellular bridges are evolutionarily conserved structures that connect differentiating germ cells and are required for spermatogenesis and male fertility. Acts by promoting the conversion of midbodies into intercellular bridges via its interaction with CEP55: interaction with CEP55 inhibits the interaction between CEP55 and PDCD6IP/ALIX and TSG101, blocking cell abscission and leading to transform midbodies into intercellular bridges. Also plays a role during mitosis: recruited to kinetochores by PLK1 during early mitosis and regulates the maturation of the outer kinetochores and microtubule attachment. Has no protein kinase activity in vitro. The sequence is that of Inactive serine/threonine-protein kinase TEX14 (TEX14) from Bos taurus (Bovine).